Consider the following 612-residue polypeptide: Chaperone protein DnaK (612 aa).

Position 174 is a phosphothreonine; by autocatalysis (threonine 174). The interval 578–612 (GAQAGAQGQGAAGGQKQDGNVYDADYKVVDDDKKE) is disordered. The segment covering 601 to 612 (ADYKVVDDDKKE) has biased composition (basic and acidic residues).

The protein belongs to the heat shock protein 70 family.

Functionally, acts as a chaperone. This chain is Chaperone protein DnaK, found in Moorella thermoacetica (strain ATCC 39073 / JCM 9320).